A 180-amino-acid polypeptide reads, in one-letter code: MGDPKRQRKKYETPPHPWIKERLDRERVLMDKYELKNKKELWKHETQLKNFRRRARRLLAARGKQAEIEREQLLARLKRLGLLPEDAVLDDVLSLTIEDILERRLQTIVYKKGLARTMRQARQLIVHGHIEVNGQIIRSPSYLVLKEEEDTITYARTSPFANPQHPERMMIEKAKQGGEA.

The S4 RNA-binding domain maps to 103 to 174 (RRLQTIVYKK…HPERMMIEKA (72 aa)).

The protein belongs to the universal ribosomal protein uS4 family. As to quaternary structure, part of the 30S ribosomal subunit. Contacts protein S5. The interaction surface between S4 and S5 is involved in control of translational fidelity.

Its function is as follows. One of the primary rRNA binding proteins, it binds directly to 16S rRNA where it nucleates assembly of the body of the 30S subunit. Functionally, with S5 and S12 plays an important role in translational accuracy. The polypeptide is Small ribosomal subunit protein uS4 (Pyrococcus abyssi (strain GE5 / Orsay)).